A 378-amino-acid polypeptide reads, in one-letter code: MGIHGLAKLIADVAPSAIRENDIKSYFGRKVAIDASMSIYQFLIAVRQGGDVLQNEEGETTSLMGMFYRTIRMENGIKPVYVFDGKPPQLKSGELAKRSERRAEAEKQLQQAQEAGMEEEVEKFTKRLVKVTKQHNDECKHLLSLMGIPYLDAPSEAEASCAALAKAGKVYAAATEDMDCLTFGSPVLMRHLTASEAKKLPIQEFHLSRVLQELGLNQEQFVDLCILLGSDYCESIRGIGAKRAVDLIQKHKSIEEIVRRLDPSKYPVPENWLHKEAQQLFLEPEVVDPESVELKWSEPNEEELVKFMCGEKQFSEERIRSGVKRLSKSRQGSTQGRLDDFFKVTGSLSSAKRKEPEPKGPAKKKAKTGGAGKFRRGK.

The tract at residues 1–102 is N-domain; it reads MGIHGLAKLI…GELAKRSERR (102 aa). R19 carries the symmetric dimethylarginine; by PRMT5 modification. D34 serves as a coordination point for Mg(2+). Positions 47 and 69 each coordinate DNA. K78 bears the N6-acetyllysine mark. D84 serves as a coordination point for Mg(2+). 2 positions are modified to symmetric dimethylarginine; by PRMT5: R98 and R102. The I-domain stretch occupies residues 120–251; it reads EVEKFTKRLV…KRAVDLIQKH (132 aa). Positions 156, 158, 177, and 179 each coordinate Mg(2+). E156 serves as a coordination point for DNA. The residue at position 185 (S185) is a Phosphoserine; by CDK2. Position 190 is a symmetric dimethylarginine; by PRMT5 (R190). Residue S195 is modified to Phosphoserine. Residues G229 and D231 each coordinate DNA. Residue D231 participates in Mg(2+) binding. Residues S253, S291, and S333 each carry the phosphoserine modification. Residues 325-378 are disordered; sequence RLSKSRQGSTQGRLDDFFKVTGSLSSAKRKEPEPKGPAKKKAKTGGAGKFRRGK. A Phosphothreonine modification is found at T334. Residues 334 to 342 form an interaction with PCNA region; that stretch reads TQGRLDDFF. An N6-acetyllysine mark is found at K352, K373, and K378. Residues 361-378 show a composition bias toward basic residues; it reads PAKKKAKTGGAGKFRRGK.

The protein belongs to the XPG/RAD2 endonuclease family. FEN1 subfamily. Interacts with PCNA. Three molecules of FEN1 bind to one PCNA trimer with each molecule binding to one PCNA monomer. PCNA stimulates the nuclease activity without altering cleavage specificity. The C-terminal domain binds EP300; can bind simultaneously to both PCNA and EP300. Interacts with DDX11; this interaction is direct and increases flap endonuclease activity of FEN1. Interacts with WDR4; regulating its endonuclease activity. Interacts with POLB. Mg(2+) is required as a cofactor. In terms of processing, acetylated by EP300. Acetylation inhibits both endonuclease and exonuclease activity. Acetylation also reduces DNA-binding activity but does not affect interaction with PCNA or EP300. Post-translationally, phosphorylation upon DNA damage induces relocalization to the nuclear plasma. Phosphorylation at Ser-185 by CDK2 occurs during late S-phase and results in dissociation from PCNA. Methylation at Arg-190 by PRMT5 impedes Ser-185 phosphorylation and increases interaction with PCNA.

Its subcellular location is the nucleus. The protein resides in the nucleolus. It is found in the nucleoplasm. It localises to the mitochondrion. In terms of biological role, structure-specific nuclease with 5'-flap endonuclease and 5'-3' exonuclease activities involved in DNA replication and repair. During DNA replication, cleaves the 5'-overhanging flap structure that is generated by displacement synthesis when DNA polymerase encounters the 5'-end of a downstream Okazaki fragment. It enters the flap from the 5'-end and then tracks to cleave the flap base, leaving a nick for ligation. Also involved in the long patch base excision repair (LP-BER) pathway, by cleaving within the apurinic/apyrimidinic (AP) site-terminated flap. Acts as a genome stabilization factor that prevents flaps from equilibrating into structures that lead to duplications and deletions. Also possesses 5'-3' exonuclease activity on nicked or gapped double-stranded DNA, and exhibits RNase H activity. Also involved in replication and repair of rDNA and in repairing mitochondrial DNA. The sequence is that of Flap endonuclease 1 from Mus musculus (Mouse).